A 155-amino-acid polypeptide reads, in one-letter code: Small ribosomal subunit protein uS7cz/uS7cy (155 aa).

Belongs to the universal ribosomal protein uS7 family. Part of the 30S ribosomal subunit.

It is found in the plastid. The protein localises to the chloroplast. In terms of biological role, one of the primary rRNA binding proteins, it binds directly to 16S rRNA where it nucleates assembly of the head domain of the 30S subunit. This Phaseolus vulgaris (Kidney bean) protein is Small ribosomal subunit protein uS7cz/uS7cy (rps7-A).